The following is a 360-amino-acid chain: 3-dehydroquinate synthase (360 aa).

NAD(+)-binding positions include 105–109, 129–130, K142, K151, and 169–172; these read GVVGD, TT, and TLKT. Zn(2+) contacts are provided by E184, H247, and H263.

The protein belongs to the sugar phosphate cyclases superfamily. Dehydroquinate synthase family. Requires Co(2+) as cofactor. Zn(2+) is required as a cofactor. NAD(+) serves as cofactor.

Its subcellular location is the cytoplasm. It carries out the reaction 7-phospho-2-dehydro-3-deoxy-D-arabino-heptonate = 3-dehydroquinate + phosphate. The protein operates within metabolic intermediate biosynthesis; chorismate biosynthesis; chorismate from D-erythrose 4-phosphate and phosphoenolpyruvate: step 2/7. Its function is as follows. Catalyzes the conversion of 3-deoxy-D-arabino-heptulosonate 7-phosphate (DAHP) to dehydroquinate (DHQ). This chain is 3-dehydroquinate synthase, found in Acetivibrio thermocellus (strain ATCC 27405 / DSM 1237 / JCM 9322 / NBRC 103400 / NCIMB 10682 / NRRL B-4536 / VPI 7372) (Clostridium thermocellum).